A 319-amino-acid chain; its full sequence is L-lactate dehydrogenase 2 (319 aa).

Residues Val-16, Asp-37, Lys-42, Tyr-68, and 82–83 contribute to the NAD(+) site; that span reads GA. 2 residues coordinate substrate: Gln-85 and Arg-91. NAD(+)-binding positions include Ser-104, 121–123, and Ser-146; that span reads AAN. 123-126 is a substrate binding site; the sequence is NPVD. Position 151 to 154 (151 to 154) interacts with substrate; that stretch reads DSAR. The Proton acceptor role is filled by His-178. At Tyr-222 the chain carries Phosphotyrosine. Thr-231 contributes to the substrate binding site.

Belongs to the LDH/MDH superfamily. LDH family. As to quaternary structure, homotetramer.

The protein localises to the cytoplasm. The catalysed reaction is (S)-lactate + NAD(+) = pyruvate + NADH + H(+). Its pathway is fermentation; pyruvate fermentation to lactate; (S)-lactate from pyruvate: step 1/1. Functionally, catalyzes the conversion of lactate to pyruvate (Potential). Contributes to S.aureus growth during nitrosative stress in both aerobically and anaerobically cultured cells, despite playing a secondary role in this resistance mechanism. This Staphylococcus aureus (strain USA300) protein is L-lactate dehydrogenase 2.